Here is a 158-residue protein sequence, read N- to C-terminus: UPF0145 protein Psyc_1853 (158 aa).

Over residues I113–S122 the composition is skewed to polar residues. The segment at I113–E158 is disordered.

The protein belongs to the UPF0145 family.

The protein is UPF0145 protein Psyc_1853 of Psychrobacter arcticus (strain DSM 17307 / VKM B-2377 / 273-4).